The sequence spans 57 residues: Large ribosomal subunit protein bL32 (57 aa).

This sequence belongs to the bacterial ribosomal protein bL32 family.

This chain is Large ribosomal subunit protein bL32, found in Corynebacterium glutamicum (strain R).